A 795-amino-acid chain; its full sequence is MKFSESWLREWVKPAINSEELAHQITMAGLEVDEVAPVAGEFTGVKVGKVVECGQHPDADKLRVTKIDIGEEELLDIVCGASNCRLGLTVAVATVGAVLPGNFKIKKAKLRGVPSHGMLCSFSELGIDVESEGILELPEGTTLGADVRDILELNDVAIDVDLTANRADCFSIRGLAREVGVLNRADVTEPTIAAVATSIEDAVSIEVKATEACPRYLGRVIKNVNAKAETPIWMQEKLRRCGIRSIDAIVDITNYVMLEQGQPMHAFDLAKIDGGIVVRMAEQDEKLTLLDGNEAKLNDNTLVIADQNKALAIAGIFGGQESGVTSETTDIMLECAFFAPDHIRGRARAYGLHTDSSLRFERGVDSTLQAAAMERATQLLVELCGGEVAPVVAVESEADLPKANTVELRRSKLDGLLGHHIPSTDVVEILTRLGCAVESTDTGWTASSPSWRFDIAIEQDLIEEVGRIYGYNNIPNQAPVAALNMNDHKEANQPLKRVRDLLVDRGYHEAITYSFVEPEQQKLIVPEIEPLILPFPISAEMSAMRLSLWTGLINTVVHNQKRQQPRVRLFESGLRFIPEESAENGMRQEMMLAGIIAGTRGEEHWDIATNTVDFFDLKGDLEAVLELTANELAYEFKAAKHPALHPGQTAAIVVDGKEVGFIGTVHPELERKFGLNGRTIMFEIEWDAINTRVIPEAASVSKFPANRRDIAIVADEAIASGDIVAECLASGGELLTSAKLFDVYRGQGVEEGKKSLAIALTLQSVERTLEEADITSAVDAIVAAIGEKFSATLRD.

The tRNA-binding domain maps to alanine 39–arginine 148. The B5 domain occupies proline 401 to asparagine 476. Positions 454, 460, 463, and 464 each coordinate Mg(2+). The 94-residue stretch at serine 701–arginine 794 folds into the FDX-ACB domain.

Belongs to the phenylalanyl-tRNA synthetase beta subunit family. Type 1 subfamily. Tetramer of two alpha and two beta subunits. Mg(2+) serves as cofactor.

The protein localises to the cytoplasm. The catalysed reaction is tRNA(Phe) + L-phenylalanine + ATP = L-phenylalanyl-tRNA(Phe) + AMP + diphosphate + H(+). The chain is Phenylalanine--tRNA ligase beta subunit from Aliivibrio fischeri (strain ATCC 700601 / ES114) (Vibrio fischeri).